The sequence spans 24 residues: FLPMLAGLAASMVPKLVCLITKKC.

Cys18 and Cys24 are oxidised to a cystine.

Expressed by the skin glands.

It is found in the secreted. Functionally, antibacterial activity against Gram-positive bacterium S.aureus and Gram-negative bacterium E.coli. This Rana luteiventris (Columbia spotted frog) protein is Brevinin-1La.